Consider the following 519-residue polypeptide: Glutamate--cysteine ligase (519 aa).

Belongs to the glutamate--cysteine ligase type 1 family. Type 1 subfamily.

The enzyme catalyses L-cysteine + L-glutamate + ATP = gamma-L-glutamyl-L-cysteine + ADP + phosphate + H(+). It participates in sulfur metabolism; glutathione biosynthesis; glutathione from L-cysteine and L-glutamate: step 1/2. The protein is Glutamate--cysteine ligase of Yersinia pseudotuberculosis serotype I (strain IP32953).